A 220-amino-acid polypeptide reads, in one-letter code: Iron-sulfur cluster repair protein YtfE (220 aa).

The protein belongs to the RIC family. YtfE subfamily. In terms of assembly, homodimer.

The protein localises to the cytoplasm. Di-iron-containing protein involved in the repair of iron-sulfur clusters damaged by oxidative and nitrosative stress conditions. This is Iron-sulfur cluster repair protein YtfE from Salmonella typhimurium (strain LT2 / SGSC1412 / ATCC 700720).